The sequence spans 417 residues: NADH-quinone oxidoreductase subunit D (417 aa).

It belongs to the complex I 49 kDa subunit family. In terms of assembly, NDH-1 is composed of 14 different subunits. Subunits NuoB, C, D, E, F, and G constitute the peripheral sector of the complex.

Its subcellular location is the cell inner membrane. It catalyses the reaction a quinone + NADH + 5 H(+)(in) = a quinol + NAD(+) + 4 H(+)(out). NDH-1 shuttles electrons from NADH, via FMN and iron-sulfur (Fe-S) centers, to quinones in the respiratory chain. The immediate electron acceptor for the enzyme in this species is believed to be ubiquinone. Couples the redox reaction to proton translocation (for every two electrons transferred, four hydrogen ions are translocated across the cytoplasmic membrane), and thus conserves the redox energy in a proton gradient. The polypeptide is NADH-quinone oxidoreductase subunit D (Albidiferax ferrireducens (strain ATCC BAA-621 / DSM 15236 / T118) (Rhodoferax ferrireducens)).